The sequence spans 108 residues: Acid stress chaperone HdeB (108 aa).

The first 29 residues, 1-29 (MNISSLRKAFIFMGAVAALSLVNAQSALA), serve as a signal peptide directing secretion. An N6-acetyllysine modification is found at K93.

This sequence belongs to the HdeB family.

The protein resides in the periplasm. In terms of biological role, required for optimal acid stress protection, which is important for survival of enteric bacteria in the acidic environment of the host stomach. Exhibits a chaperone-like activity at acidic pH by preventing the aggregation of many different periplasmic proteins. This chain is Acid stress chaperone HdeB, found in Escherichia coli O6:H1 (strain CFT073 / ATCC 700928 / UPEC).